We begin with the raw amino-acid sequence, 595 residues long: Thiol:disulfide interchange protein DsbD (595 aa).

Positions 1–24 (MAQRFITLILLLCSVLLAPHSAQS) are cleaved as a signal peptide. Cys-134 and Cys-140 are joined by a disulfide. The segment at 166 to 186 (NSSATVNPPATTQPEGDATPV) is disordered. A run of 9 helical transmembrane segments spans residues 197-217 (ALLI…YPLI), 233-253 (ILIL…LLGL), 270-290 (YVLI…FGLY), 311-331 (GGSL…CSPC), 332-352 (TTAP…MLAG), 353-373 (GGTL…VTLF), 384-404 (WMQY…VFLL), 411-431 (VWGL…AFVL), and 435-455 (AHAG…LIVA). Cys-209 and Cys-331 are disulfide-bonded. Residues 452–592 (LIVARPLQDW…FLQHLQNTPA (141 aa)) enclose the Thioredoxin domain. Cys-507 and Cys-510 are oxidised to a cystine.

It belongs to the thioredoxin family. DsbD subfamily.

It is found in the cell inner membrane. The catalysed reaction is [protein]-dithiol + NAD(+) = [protein]-disulfide + NADH + H(+). It carries out the reaction [protein]-dithiol + NADP(+) = [protein]-disulfide + NADPH + H(+). In terms of biological role, required to facilitate the formation of correct disulfide bonds in some periplasmic proteins and for the assembly of the periplasmic c-type cytochromes. Acts by transferring electrons from cytoplasmic thioredoxin to the periplasm. This transfer involves a cascade of disulfide bond formation and reduction steps. The protein is Thiol:disulfide interchange protein DsbD of Yersinia pestis bv. Antiqua (strain Nepal516).